Here is a 286-residue protein sequence, read N- to C-terminus: Lipoyl synthase (286 aa).

The [4Fe-4S] cluster site is built by Cys38, Cys43, Cys49, Cys64, Cys68, Cys71, and Ser276. In terms of domain architecture, Radical SAM core spans Trp50–Leu265.

This sequence belongs to the radical SAM superfamily. Lipoyl synthase family. It depends on [4Fe-4S] cluster as a cofactor.

It localises to the cytoplasm. The catalysed reaction is [[Fe-S] cluster scaffold protein carrying a second [4Fe-4S](2+) cluster] + N(6)-octanoyl-L-lysyl-[protein] + 2 oxidized [2Fe-2S]-[ferredoxin] + 2 S-adenosyl-L-methionine + 4 H(+) = [[Fe-S] cluster scaffold protein] + N(6)-[(R)-dihydrolipoyl]-L-lysyl-[protein] + 4 Fe(3+) + 2 hydrogen sulfide + 2 5'-deoxyadenosine + 2 L-methionine + 2 reduced [2Fe-2S]-[ferredoxin]. It functions in the pathway protein modification; protein lipoylation via endogenous pathway; protein N(6)-(lipoyl)lysine from octanoyl-[acyl-carrier-protein]: step 2/2. Functionally, catalyzes the radical-mediated insertion of two sulfur atoms into the C-6 and C-8 positions of the octanoyl moiety bound to the lipoyl domains of lipoate-dependent enzymes, thereby converting the octanoylated domains into lipoylated derivatives. This is Lipoyl synthase from Karelsulcia muelleri (strain GWSS) (Sulcia muelleri).